A 353-amino-acid polypeptide reads, in one-letter code: Putative transport protein aq_740 (353 aa).

8 consecutive transmembrane segments (helical) span residues 4 to 24 (LSLF…LYLL), 28 to 48 (FNPI…YGFI), 60 to 80 (FLVI…FAVI), 156 to 176 (VYTA…LFFI), 209 to 229 (VLAV…MGFI), 240 to 260 (LIWA…AAFV), 268 to 288 (LFTT…TFLI), and 309 to 329 (VALF…GVFL).

This sequence belongs to the autoinducer-2 exporter (AI-2E) (TC 2.A.86) family.

It localises to the cell membrane. The chain is Putative transport protein aq_740 from Aquifex aeolicus (strain VF5).